The following is a 167-amino-acid chain: MLNRLESLTQRVGGSNELIDQWLHARKELLVSYCTVIGIKPQKGKHTPLNEKALENFCHNLVDYLSSGHFHIYDRIIKQVEGASSPKMALTTKVYPALKNNTQTIMAFHDRYTNIEIDDDSCTEFQQALSDIGEALDARFRLEDQLIQWAAESWQAAKPVIQAGQVK.

Belongs to the Rsd/AlgQ family. In terms of assembly, interacts with RpoD.

It localises to the cytoplasm. Functionally, binds RpoD and negatively regulates RpoD-mediated transcription activation by preventing the interaction between the primary sigma factor RpoD with the catalytic core of the RNA polymerase and with promoter DNA. May be involved in replacement of the RNA polymerase sigma subunit from RpoD to RpoS during the transition from exponential growth to the stationary phase. The protein is Regulator of sigma D of Yersinia enterocolitica serotype O:8 / biotype 1B (strain NCTC 13174 / 8081).